A 263-amino-acid chain; its full sequence is Kallikrein 1-related peptidase b27 (263 aa).

The signal sequence occupies residues 1–17 (MRFLILFLALSLGGIDA). Positions 18-24 (APPVQSR) are cleaved as a propeptide — activation peptide. The Peptidase S1 domain occupies 25-260 (IIGGFKCKKN…FTSWIKDTMA (236 aa)). Intrachain disulfides connect cysteine 31–cysteine 175, cysteine 50–cysteine 66, cysteine 154–cysteine 221, cysteine 186–cysteine 200, and cysteine 211–cysteine 236. Histidine 65 (charge relay system) is an active-site residue. Residues asparagine 69 and asparagine 105 are each glycosylated (N-linked (GlcNAc...) asparagine). Aspartate 122 acts as the Charge relay system in catalysis. Serine 215 acts as the Charge relay system in catalysis.

The protein belongs to the peptidase S1 family. Kallikrein subfamily. Expressed in testis and submaxillary gland. Not expressed in heart, brain, spleen, lung, liver, muscle, kidney and ovary. In the testis, expression localized specifically to Leydig cells in the interstitial tissues.

Its activity is regulated as follows. Strongly inhibited by protease inhibitors diisopropyl fluorophosphate, phenylmethanesulfonyl fluoride and SBTI. Its function is as follows. Serine protease with chymotrypsin-like cleavage specificity. Shows activity towards casein, gelatin, IGFBP3 and fibronectin but not towards laminin or collagens I and IV. Does not hydrolyze kininogin to release Lys-bradykinin. This is Kallikrein 1-related peptidase b27 (Klk1b27) from Mus musculus (Mouse).